An 828-amino-acid polypeptide reads, in one-letter code: Leucine--tRNA ligase (828 aa).

The 'HIGH' region signature appears at 42-52; it reads PYPSGTLHVGH. The short motif at 582–586 is the 'KMSKS' region element; the sequence is KMSKS. An ATP-binding site is contributed by Lys-585.

Belongs to the class-I aminoacyl-tRNA synthetase family.

The protein resides in the cytoplasm. The catalysed reaction is tRNA(Leu) + L-leucine + ATP = L-leucyl-tRNA(Leu) + AMP + diphosphate. The chain is Leucine--tRNA ligase from Petrotoga mobilis (strain DSM 10674 / SJ95).